Reading from the N-terminus, the 193-residue chain is dTTP/UTP pyrophosphatase (193 aa).

The active-site Proton acceptor is the D71.

Belongs to the Maf family. YhdE subfamily. The cofactor is a divalent metal cation.

The protein localises to the cytoplasm. It catalyses the reaction dTTP + H2O = dTMP + diphosphate + H(+). The enzyme catalyses UTP + H2O = UMP + diphosphate + H(+). In terms of biological role, nucleoside triphosphate pyrophosphatase that hydrolyzes dTTP and UTP. May have a dual role in cell division arrest and in preventing the incorporation of modified nucleotides into cellular nucleic acids. This chain is dTTP/UTP pyrophosphatase, found in Citrifermentans bemidjiense (strain ATCC BAA-1014 / DSM 16622 / JCM 12645 / Bem) (Geobacter bemidjiensis).